The sequence spans 99 residues: Small ribosomal subunit protein bS20 (99 aa).

The segment covering 1–20 (MASAKPKKKNPRLASGRKRV) has biased composition (basic residues). Positions 1-21 (MASAKPKKKNPRLASGRKRVR) are disordered.

It belongs to the bacterial ribosomal protein bS20 family.

In terms of biological role, binds directly to 16S ribosomal RNA. This is Small ribosomal subunit protein bS20 from Verminephrobacter eiseniae (strain EF01-2).